We begin with the raw amino-acid sequence, 111 residues long: uncharacterized protein (111 aa).

Residues 8–111 enclose the HIT domain; it reads LFLKIIKREE…HVHIIPYYKK (104 aa). The Histidine triad motif signature appears at 100–104; that stretch reads HTHVH.

This is an uncharacterized protein from Mesomycoplasma hyorhinis (Mycoplasma hyorhinis).